We begin with the raw amino-acid sequence, 204 residues long: Octanoyltransferase (204 aa).

Residues 27-204 (KNTKDELWIV…LINYVSRNRH (178 aa)) form the BPL/LPL catalytic domain. Substrate is bound by residues 66–73 (RGGQVTYH), 133–135 (ALG), and 146–148 (GLS). Catalysis depends on cysteine 164, which acts as the Acyl-thioester intermediate.

The protein belongs to the LipB family.

Its subcellular location is the cytoplasm. The enzyme catalyses octanoyl-[ACP] + L-lysyl-[protein] = N(6)-octanoyl-L-lysyl-[protein] + holo-[ACP] + H(+). The protein operates within protein modification; protein lipoylation via endogenous pathway; protein N(6)-(lipoyl)lysine from octanoyl-[acyl-carrier-protein]: step 1/2. Functionally, catalyzes the transfer of endogenously produced octanoic acid from octanoyl-acyl-carrier-protein onto the lipoyl domains of lipoate-dependent enzymes. Lipoyl-ACP can also act as a substrate although octanoyl-ACP is likely to be the physiological substrate. The chain is Octanoyltransferase from Vesicomyosocius okutanii subsp. Calyptogena okutanii (strain HA).